The chain runs to 116 residues: PTS system galactose-specific EIIA component (116 aa).

Positions 11–109 constitute a PTS EIIA type-3 domain; sequence DDYMGVVMGI…AVEVVGQERR (99 aa). Histidine 85 serves as the catalytic Tele-phosphohistidine intermediate. Histidine 85 carries the phosphohistidine; by HPr modification. Aspartate 88 is a Mg(2+) binding site.

Homotrimer. It depends on Mg(2+) as a cofactor.

Its function is as follows. The phosphoenolpyruvate-dependent sugar phosphotransferase system (sugar PTS), a major carbohydrate active transport system, catalyzes the phosphorylation of incoming sugar substrates concomitantly with their translocation across the cell membrane. Involved in galactose transport with PtcB and Lmg_0963. The sequence is that of PTS system galactose-specific EIIA component from Lactococcus lactis subsp. cremoris (strain MG1363).